A 224-amino-acid polypeptide reads, in one-letter code: Putative O-methyltransferase MT1258 (224 aa).

Residues 1–10 (MDGTPGHDDM) are compositionally biased toward basic and acidic residues. Positions 1 to 21 (MDGTPGHDDMPGQPAPSRGES) are disordered. S-adenosyl-L-methionine-binding positions include Val51, Glu73, 75–76 (GT), Ser81, Asp99, and Ile100. Asp147 is a substrate binding site. An S-adenosyl-L-methionine-binding site is contributed by Asp149.

The protein belongs to the class I-like SAM-binding methyltransferase superfamily. Cation-dependent O-methyltransferase family.

The polypeptide is Putative O-methyltransferase MT1258 (Mycobacterium tuberculosis (strain CDC 1551 / Oshkosh)).